The chain runs to 432 residues: Methylenetetrahydrofolate--tRNA-(uracil-5-)-methyltransferase TrmFO (432 aa).

7–12 (GAGLAG) is a binding site for FAD.

It belongs to the MnmG family. TrmFO subfamily. Requires FAD as cofactor.

It localises to the cytoplasm. The catalysed reaction is uridine(54) in tRNA + (6R)-5,10-methylene-5,6,7,8-tetrahydrofolate + NADH + H(+) = 5-methyluridine(54) in tRNA + (6S)-5,6,7,8-tetrahydrofolate + NAD(+). The enzyme catalyses uridine(54) in tRNA + (6R)-5,10-methylene-5,6,7,8-tetrahydrofolate + NADPH + H(+) = 5-methyluridine(54) in tRNA + (6S)-5,6,7,8-tetrahydrofolate + NADP(+). Catalyzes the folate-dependent formation of 5-methyl-uridine at position 54 (M-5-U54) in all tRNAs. In Anoxybacillus flavithermus (strain DSM 21510 / WK1), this protein is Methylenetetrahydrofolate--tRNA-(uracil-5-)-methyltransferase TrmFO.